Consider the following 881-residue polypeptide: NACHT, LRR and PYD domains-containing protein 6 (881 aa).

Positions 1-129 (MDAAGASCSS…EHVLRQHAKV (129 aa)) constitute a Pyrin domain. S104 is modified (phosphoserine). The interval 154–175 (AGEDELLGTSGEPEPERARRSD) is disordered. The 317-residue stretch at 194-510 (LTVVLQGPAG…EFLAALSYLL (317 aa)) folds into the NACHT domain. Position 200–207 (200–207 (GPAGIGKT)) interacts with ATP. An LRR 1 repeat occupies 459–484 (EKDLERLKLQGSQVQTMFLSKKELPG). The tract at residues 579-611 (QSQPKVATVGAEKKDELKDEEAEEEEEEEEEEE) is disordered. The segment covering 596 to 611 (KDEEAEEEEEEEEEEE) has biased composition (acidic residues). LRR repeat units follow at residues 637 to 660 (LSSLPEMVLERVRLTRMDLEVLSY), 749 to 772 (APSLRELGLLQNRLTEAGLRLLSQ), and 839 to 863 (TLSLTSVELTENPLRELQAVKTLKP).

The protein belongs to the NLRP family. As to quaternary structure, homomultimer; forms the NLRP6 inflammasome polymeric complex, a filament composed of homopolymers in response to pathogens and other damage-associated signals. The core of NLRP6 inflammasomes consists of a signal sensor component (NLRP6), an adapter (PYCARD/ASC), which recruits effector pro-inflammatory caspases (CASP1 and CASP4). Interacts (via pyrin domain) with PYCARD/ASC (via pyrin domain); interaction takes place following NLRP6 activation and formation of liquid-liquid phase separation (LLPS), initiating nucleation which greatly enhances further addition of soluble PYCARD/ASC molecules to the speck in a prion-like polymerization process. Clustered PYCARD/ASC nucleates the formation of CASP1 (or possibly CASP4) filaments through the interaction of their respective CARD domains, acting as a platform for CASP1 polymerization. CASP1 filament formation increases local enzyme concentration, resulting in trans-autocleavage and activation. Active CASP1 then processes IL1B and IL18 precursors, leading to the release of mature cytokines in the extracellular milieu and inflammatory response. Interacts with DHX15. In terms of processing, polyubiquitinated with 'Lys-63'-linked chains, promoting the interaction with PYCARD/ASC and formation of the NLRP6 inflammasome. Deubiquitination by CYLD decreases the interaction with PYCARD/ASC. Detected in several tissues. Expressed in renal epithelial cells in medullary thick ascending limb of Henle, as well as in salivary gland apical epithelium (at protein level). Isoform 1 is widely expressed. Isoform 2 is primarily expressed in kidney (at protein level).

It localises to the cytoplasm. The protein resides in the inflammasome. It is found in the cell membrane. Its subcellular location is the nucleus membrane. Functionally, acts as the sensor component of the NLRP6 inflammasome, which mediates inflammasome activation in response to various pathogen-associated signals, leading to maturation and secretion of IL1B and IL18. Inflammasomes are supramolecular complexes that assemble in the cytosol in response to pathogens and other damage-associated signals and play critical roles in innate immunity and inflammation. Acts as a recognition receptor (PRR): recognizes and binds specific pathogens and other damage-associated signals, such as lipoteichoic acid (LTA), a cell-wall component of Gram-positive bacteria, or double stranded RNA (dsRNA). May also recognize and bind lipopolysaccharide (LPS), a major component of the outer membrane of Gram-negative bacteria; however, LPS is probably not a major activator of the NLRP6 inflammasome. Following LTA- or dsRNA-binding, NLRP6 undergoes liquid-liquid phase separation (LLPS), enhancing multivalent interactions, an essential step for the formation of the NLRP6 inflammasome polymeric complex. The NLRP6 inflammasome acts by promoting recruitment of effector pro-inflammatory caspases (CASP1 and/or CASP4) that catalyze maturation and secretion of IL1B and IL18 in the extracellular milieu. The NLRP6 inflammasome plays a central role in the maintenance of epithelial integrity and host defense against microbial infections in the intestine. Required to restrict infection against Gram-positive bacteria by recognizing lipoteichoic acid (LTA), leading to recruitment of CASP4 and CASP1, and subsequent maturation and secretion of IL1B and IL18. Involved in intestinal antiviral innate immunity together with DHX15: recognizes and binds viral dsRNA to restrict infection by enteric viruses through the interferon pathway and GSDMD-dependent release of IL18. Required to prevent infection by the apicomplexan parasite Cryptosporidium in enterocytes by promoting GSDMD-dependent release of IL18. The NLRP6 inflammasome may also regulate the gut microbiota composition by acting as a sensor of microbiota-associated metabolites to form a PYCARD/ASC-dependent inflammasome for downstream IL18 release and secretion of antimicrobial peptides. Essential for gut mucosal self-renewal and proliferation. Regulate mucus secretion in an inflammasome- and autophagy-dependent manner to prevent invasion by enteric bacteria,. During systemic bacterial infections, the NLRP6 inflammasome negatively regulates neutrophil recruitment and neutrophil extracellular traps (NETs) formation. May promote peripheral nerve recovery following injury via an inflammasome-independent mechanism. This chain is NACHT, LRR and PYD domains-containing protein 6, found in Rattus norvegicus (Rat).